Reading from the N-terminus, the 97-residue chain is Aspartyl/glutamyl-tRNA(Asn/Gln) amidotransferase subunit C (97 aa).

Belongs to the GatC family. As to quaternary structure, heterotrimer of A, B and C subunits.

The enzyme catalyses L-glutamyl-tRNA(Gln) + L-glutamine + ATP + H2O = L-glutaminyl-tRNA(Gln) + L-glutamate + ADP + phosphate + H(+). It carries out the reaction L-aspartyl-tRNA(Asn) + L-glutamine + ATP + H2O = L-asparaginyl-tRNA(Asn) + L-glutamate + ADP + phosphate + 2 H(+). Its function is as follows. Allows the formation of correctly charged Asn-tRNA(Asn) or Gln-tRNA(Gln) through the transamidation of misacylated Asp-tRNA(Asn) or Glu-tRNA(Gln) in organisms which lack either or both of asparaginyl-tRNA or glutaminyl-tRNA synthetases. The reaction takes place in the presence of glutamine and ATP through an activated phospho-Asp-tRNA(Asn) or phospho-Glu-tRNA(Gln). In Synechococcus sp. (strain CC9605), this protein is Aspartyl/glutamyl-tRNA(Asn/Gln) amidotransferase subunit C.